Consider the following 513-residue polypeptide: ATP synthase subunit alpha (513 aa).

169–176 is an ATP binding site; it reads GDRQTGKT.

The protein belongs to the ATPase alpha/beta chains family. F-type ATPases have 2 components, CF(1) - the catalytic core - and CF(0) - the membrane proton channel. CF(1) has five subunits: alpha(3), beta(3), gamma(1), delta(1), epsilon(1). CF(0) has three main subunits: a(1), b(2) and c(9-12). The alpha and beta chains form an alternating ring which encloses part of the gamma chain. CF(1) is attached to CF(0) by a central stalk formed by the gamma and epsilon chains, while a peripheral stalk is formed by the delta and b chains.

The protein localises to the cell inner membrane. It catalyses the reaction ATP + H2O + 4 H(+)(in) = ADP + phosphate + 5 H(+)(out). Functionally, produces ATP from ADP in the presence of a proton gradient across the membrane. The alpha chain is a regulatory subunit. The protein is ATP synthase subunit alpha of Cupriavidus pinatubonensis (strain JMP 134 / LMG 1197) (Cupriavidus necator (strain JMP 134)).